A 376-amino-acid chain; its full sequence is Chaperone protein DnaJ (376 aa).

Residues 5-70 enclose the J domain; it reads DYYEVLGVAR…NKRRMYDSHG (66 aa). The CR-type zinc-finger motif lies at 132 to 209; it reads GVERRIEIPT…CHGNGRVEED (78 aa). Zn(2+) contacts are provided by C145, C148, C161, C164, C183, C186, C197, and C200. 4 CXXCXGXG motif repeats span residues 145–152, 161–168, 183–190, and 197–204; these read CGDCDGSG, CNVCHGRG, CHNCGGRG, and CKTCHGNG. A disordered region spans residues 223–242; it reads GDRIRLSGEGEAGPAGTPPG.

This sequence belongs to the DnaJ family. As to quaternary structure, homodimer. It depends on Zn(2+) as a cofactor.

The protein localises to the cytoplasm. Functionally, participates actively in the response to hyperosmotic and heat shock by preventing the aggregation of stress-denatured proteins and by disaggregating proteins, also in an autonomous, DnaK-independent fashion. Unfolded proteins bind initially to DnaJ; upon interaction with the DnaJ-bound protein, DnaK hydrolyzes its bound ATP, resulting in the formation of a stable complex. GrpE releases ADP from DnaK; ATP binding to DnaK triggers the release of the substrate protein, thus completing the reaction cycle. Several rounds of ATP-dependent interactions between DnaJ, DnaK and GrpE are required for fully efficient folding. Also involved, together with DnaK and GrpE, in the DNA replication of plasmids through activation of initiation proteins. In Stenotrophomonas maltophilia (strain R551-3), this protein is Chaperone protein DnaJ.